A 114-amino-acid chain; its full sequence is rRNA-processing protein cgrA (114 aa).

The segment at 1–96 (MSASESAPSA…YDKMAEKMHR (96 aa)) is disordered. Positions 40 to 101 (AKRLEARKHQ…EKMHRKRVER (62 aa)) form a coiled coil. Residues 41-93 (KRLEARKHQEAVKEHERELKEEKEAERQAHIQRIKDRRAAKEEKERYDKMAEK) show a composition bias toward basic and acidic residues.

The protein belongs to the CGR1 family.

The protein localises to the nucleus. Its subcellular location is the nucleolus. In terms of biological role, involved in nucleolar integrity and required for processing of the pre-rRNA for the 60S ribosome subunit. The polypeptide is rRNA-processing protein cgrA (cgrA) (Aspergillus terreus (strain NIH 2624 / FGSC A1156)).